Reading from the N-terminus, the 308-residue chain is Putative T-box protein 30/42 (308 aa).

Residues 11–192 (MSNEELWKER…KHSTFGNRSE (182 aa)) constitute a DNA-binding region (T-box). Residues 186–220 (TFGNRSEGGIKRKTSDAAGQLPSKRSSKKPVKKDV) are disordered.

It is found in the nucleus. In terms of biological role, involved in the regulatory network to control embryonic patterning and morphogenesis. Implicated in negatively regulating vab-7 expression at the anterior of embryos. The chain is Putative T-box protein 30/42 (tbx-30) from Caenorhabditis elegans.